Reading from the N-terminus, the 430-residue chain is T-kininogen 1 (430 aa).

Residues Met1–Ala18 form the signal peptide. A Pyrrolidone carboxylic acid modification is found at Gln19. The Cystatin kininogen-type 1 domain occupies Cys28 to Lys131. 9 disulfides stabilise this stretch: Cys28–Cys404, Cys83–Cys94, Cys107–Cys125, Cys141–Cys144, Cys205–Cys217, Cys228–Cys247, Cys263–Cys266, Cys327–Cys339, and Cys350–Cys369. Asn82 carries N-linked (GlcNAc...) asparagine glycosylation. Positions Met150–Asp253 constitute a Cystatin kininogen-type 2 domain. N-linked (GlcNAc...) asparagine glycosylation is found at Asn168 and Asn204. A Cystatin kininogen-type 3 domain is found at Val272–Met375. An N-linked (GlcNAc...) asparagine glycan is attached at Asn326. Positions Ser411 to Pro430 are disordered.

As T-kinin is preceded by a Met instead of an Arg or Lys, it is not released from its precursor by either tissue or plasma kallikrein. Plasma.

Its subcellular location is the secreted. The protein localises to the extracellular space. In terms of biological role, kininogens are plasma glycoproteins with a number of functions: (1) as precursor of the active peptide bradykinin they effect smooth muscle contraction, induction of hypotension and increase of vascular permeability. (2) They play a role in blood coagulation by helping to position optimally prekallikrein and factor XI next to factor XII. (3) They are inhibitor of thiol proteases. In Rattus norvegicus (Rat), this protein is T-kininogen 1 (Map1).